The following is a 359-amino-acid chain: Dual-specificity RNA methyltransferase RlmN 1 (359 aa).

Catalysis depends on Glu-96, which acts as the Proton acceptor. Positions 102 to 335 (FKGRATVCIS…STVRQRRGID (234 aa)) constitute a Radical SAM core domain. A disulfide bridge connects residues Cys-109 and Cys-340. Residues Cys-116, Cys-120, and Cys-123 each coordinate [4Fe-4S] cluster. S-adenosyl-L-methionine contacts are provided by residues 166–167 (GE), Ser-198, 221–223 (SLH), and Asn-297. Residue Cys-340 is the S-methylcysteine intermediate of the active site.

It belongs to the radical SAM superfamily. RlmN family. [4Fe-4S] cluster serves as cofactor.

The protein resides in the cytoplasm. It catalyses the reaction adenosine(2503) in 23S rRNA + 2 reduced [2Fe-2S]-[ferredoxin] + 2 S-adenosyl-L-methionine = 2-methyladenosine(2503) in 23S rRNA + 5'-deoxyadenosine + L-methionine + 2 oxidized [2Fe-2S]-[ferredoxin] + S-adenosyl-L-homocysteine. The catalysed reaction is adenosine(37) in tRNA + 2 reduced [2Fe-2S]-[ferredoxin] + 2 S-adenosyl-L-methionine = 2-methyladenosine(37) in tRNA + 5'-deoxyadenosine + L-methionine + 2 oxidized [2Fe-2S]-[ferredoxin] + S-adenosyl-L-homocysteine. Functionally, specifically methylates position 2 of adenine 2503 in 23S rRNA and position 2 of adenine 37 in tRNAs. m2A2503 modification seems to play a crucial role in the proofreading step occurring at the peptidyl transferase center and thus would serve to optimize ribosomal fidelity. In Myxococcus xanthus (strain DK1622), this protein is Dual-specificity RNA methyltransferase RlmN 1.